The chain runs to 64 residues: Large ribosomal subunit protein bL35 (64 aa).

The span at 1–26 (MPKIKTHRGAAKRFKKTGTGKIKRSK) shows a compositional bias: basic residues. The segment at 1–48 (MPKIKTHRGAAKRFKKTGTGKIKRSKAYASHLLGGKSPKRKRNLRKAG) is disordered.

The protein belongs to the bacterial ribosomal protein bL35 family.

This is Large ribosomal subunit protein bL35 from Syntrophomonas wolfei subsp. wolfei (strain DSM 2245B / Goettingen).